The primary structure comprises 351 residues: Histidinol-phosphate aminotransferase (351 aa).

The residue at position 221 (Lys-221) is an N6-(pyridoxal phosphate)lysine.

It belongs to the class-II pyridoxal-phosphate-dependent aminotransferase family. Histidinol-phosphate aminotransferase subfamily. Homodimer. It depends on pyridoxal 5'-phosphate as a cofactor.

The catalysed reaction is L-histidinol phosphate + 2-oxoglutarate = 3-(imidazol-4-yl)-2-oxopropyl phosphate + L-glutamate. Its pathway is amino-acid biosynthesis; L-histidine biosynthesis; L-histidine from 5-phospho-alpha-D-ribose 1-diphosphate: step 7/9. This Staphylococcus saprophyticus subsp. saprophyticus (strain ATCC 15305 / DSM 20229 / NCIMB 8711 / NCTC 7292 / S-41) protein is Histidinol-phosphate aminotransferase.